The sequence spans 360 residues: Phospho-N-acetylmuramoyl-pentapeptide-transferase (360 aa).

10 consecutive transmembrane segments (helical) span residues 26-46 (SIMA…KVIN), 73-93 (TMGG…WADL), 98-118 (VWFT…DDYW), 132-152 (WKYF…YAMG), 168-188 (VMPQ…VGTS), 199-219 (GLAI…AWAT), 236-256 (SGEL…FLWY), 263-283 (VFMG…IAVL), 288-308 (LLLL…ILQV), and 338-358 (VIVR…VTLK).

The protein belongs to the glycosyltransferase 4 family. MraY subfamily. Mg(2+) is required as a cofactor.

Its subcellular location is the cell inner membrane. The catalysed reaction is UDP-N-acetyl-alpha-D-muramoyl-L-alanyl-gamma-D-glutamyl-meso-2,6-diaminopimeloyl-D-alanyl-D-alanine + di-trans,octa-cis-undecaprenyl phosphate = di-trans,octa-cis-undecaprenyl diphospho-N-acetyl-alpha-D-muramoyl-L-alanyl-D-glutamyl-meso-2,6-diaminopimeloyl-D-alanyl-D-alanine + UMP. It participates in cell wall biogenesis; peptidoglycan biosynthesis. Functionally, catalyzes the initial step of the lipid cycle reactions in the biosynthesis of the cell wall peptidoglycan: transfers peptidoglycan precursor phospho-MurNAc-pentapeptide from UDP-MurNAc-pentapeptide onto the lipid carrier undecaprenyl phosphate, yielding undecaprenyl-pyrophosphoryl-MurNAc-pentapeptide, known as lipid I. This Haemophilus ducreyi (strain 35000HP / ATCC 700724) protein is Phospho-N-acetylmuramoyl-pentapeptide-transferase.